A 570-amino-acid chain; its full sequence is E3 ubiquitin-protein ligase ZFP91 (570 aa).

Over residues 1–12 (MPGETEEPRPPE) the composition is skewed to basic and acidic residues. The disordered stretch occupies residues 1–306 (MPGETEEPRP…PRLPKRRKKP (306 aa)). 2 stretches are compositionally biased toward low complexity: residues 31–43 (QRPP…APAG) and 59–68 (AAAAAAAAAV). Residues 69-82 (SRRRKAEYPRRRRS) are compositionally biased toward basic residues. Phosphoserine occurs at positions 83 and 103. The segment covering 94 to 104 (QQPQAAKSPSP) has biased composition (polar residues). Basic and acidic residues predominate over residues 119 to 128 (VTTDKDPKEE). The span at 207–223 (SEEEEEEEEEMLISEEE) shows a compositional bias: acidic residues. Basic and acidic residues-rich tracts occupy residues 224 to 245 (IPFK…ETPK) and 252 to 269 (KVKE…VEVE). Residues 270–282 (VKEEENEIREDEE) are compositionally biased toward acidic residues. 5 C2H2-type zinc fingers span residues 311–336 (VRCE…KYQH), 342–366 (YVCP…AKHH), 372–394 (YICE…RMIH), 400–422 (LQCE…MKKH), and 430–453 (FSCN…AKSH). The interaction with MAP3K14/NIK stretch occupies residues 338–368 (LKKKYVCPHPSCGRLFRLQKQLLRHAKHHTD).

Belongs to the krueppel C2H2-type zinc-finger protein family. Interacts with MAP3K14/NIK. In terms of tissue distribution, expressed ubiquitously, particularly at high level in testis. Isoform 2 is testis specific.

The protein resides in the nucleus. The enzyme catalyses S-ubiquitinyl-[E2 ubiquitin-conjugating enzyme]-L-cysteine + [acceptor protein]-L-lysine = [E2 ubiquitin-conjugating enzyme]-L-cysteine + N(6)-ubiquitinyl-[acceptor protein]-L-lysine.. It participates in protein modification; protein ubiquitination. Atypical E3 ubiquitin-protein ligase that mediates 'Lys-63'-linked ubiquitination of MAP3K14/NIK, leading to stabilize and activate MAP3K14/NIK. It thereby acts as an activator of the non-canonical NF-kappa-B2/NFKB2 pathway. May also play an important role in cell proliferation and/or anti-apoptosis. The chain is E3 ubiquitin-protein ligase ZFP91 (ZFP91) from Homo sapiens (Human).